The following is a 211-amino-acid chain: Ribonuclease T (211 aa).

Residues 24–198 (VVVDVETGGF…YDAEKTAHLF (175 aa)) enclose the Exonuclease domain. Residues D27, E29, H185, and D190 each coordinate Mg(2+). H185 functions as the Proton donor/acceptor in the catalytic mechanism.

This sequence belongs to the RNase T family. Homodimer. It depends on Mg(2+) as a cofactor.

In terms of biological role, trims short 3' overhangs of a variety of RNA species, leaving a one or two nucleotide 3' overhang. Responsible for the end-turnover of tRNA: specifically removes the terminal AMP residue from uncharged tRNA (tRNA-C-C-A). Also appears to be involved in tRNA biosynthesis. The protein is Ribonuclease T of Xylella fastidiosa (strain Temecula1 / ATCC 700964).